Reading from the N-terminus, the 379-residue chain is MSVDVKSAQSSKSDSLQVEPRPGERDKALNLVLGQIERNFGKGSIMRLGDASRMRVETFPTGALTLDLALGGGYPKGRVVEVYGPESSGKTTLTLHAIAEVQRRGGVAAFVDAEHALDPVYAASLGVDIENLLVSQPDTGEMALEIVDQLVRSAAVDIVVVDSVAALTPRSEIEGEMGDLAVGSQARLMSQAMRKITGNIGKSGCTVIFLNQLRLKIGVTYGNPETTTGGNALKFYASVRLDIRRIQTLKRGTEEYGIRAKVKVAKNKVAPPFRIAEFDILFGRGISTLGCLLDLAEETGVVIRKGAWYSYEGDNIGQGRDNTITWLEQNSEAQEQIEVLVRQKLTEGSEVTANSMRPLAAAARTAAKKPAVSLASEAA.

A disordered region spans residues 1-23 (MSVDVKSAQSSKSDSLQVEPRPG). Positions 7-16 (SAQSSKSDSL) are enriched in polar residues. 84 to 91 (GPESSGKT) contributes to the ATP binding site.

Belongs to the RecA family.

It localises to the cytoplasm. Its function is as follows. Can catalyze the hydrolysis of ATP in the presence of single-stranded DNA, the ATP-dependent uptake of single-stranded DNA by duplex DNA, and the ATP-dependent hybridization of homologous single-stranded DNAs. It interacts with LexA causing its activation and leading to its autocatalytic cleavage. In Prochlorococcus marinus (strain MIT 9313), this protein is Protein RecA.